Reading from the N-terminus, the 202-residue chain is Tetranectin (202 aa).

The N-terminal stretch at 1 to 21 is a signal peptide; sequence MELWGPCVLLCLFSLLTQVTA. 3 disulfide bridges follow: Cys-71–Cys-81, Cys-98–Cys-197, and Cys-173–Cys-189. The C-type lectin domain maps to 77 to 198; that stretch reads VHMKCFLAFV…CRDKLPYVCQ (122 aa).

Homotrimer.

The protein localises to the secreted. Its function is as follows. Tetranectin binds to plasminogen and to isolated kringle 4. May be involved in the packaging of molecules destined for exocytosis. Plays a role in retinal function. This chain is Tetranectin (CLEC3B), found in Bos taurus (Bovine).